We begin with the raw amino-acid sequence, 473 residues long: 6-phospho-beta-glucosidase (473 aa).

Residue E174 is the Proton donor of the active site. E366 functions as the Nucleophile in the catalytic mechanism.

Belongs to the glycosyl hydrolase 1 family.

It catalyses the reaction 6-phospho-beta-D-glucosyl-(1-&gt;4)-D-glucose + H2O = D-glucose 6-phosphate + D-glucose. The sequence is that of 6-phospho-beta-glucosidase (abgA) from Clostridium longisporum.